Reading from the N-terminus, the 245-residue chain is Dehydrogenase/reductase SDR family member 6 (245 aa).

NAD(+) contacts are provided by residues 16–18 (QGI), Asp-37, and Asp-58. Arg-144 provides a ligand contact to substrate. The active-site Proton acceptor is the Tyr-147. NAD(+)-binding positions include Lys-151 and 180 to 184 (VDTPS). 2 residues coordinate substrate: Arg-188 and Arg-205.

The protein belongs to the short-chain dehydrogenases/reductases (SDR) family. As to quaternary structure, homotetramer. In terms of tissue distribution, detected in liver, spleen and macrophages. Widely expressed.

It is found in the cytoplasm. It catalyses the reaction cis-4-hydroxy-L-proline + NAD(+) = 4-oxo-L-proline + NADH + H(+). It carries out the reaction (R)-3-hydroxybutanoate + NAD(+) = acetoacetate + NADH + H(+). The protein operates within amino-acid metabolism. It functions in the pathway siderophore biosynthesis. Its function is as follows. NAD(H)-dependent dehydrogenase/reductase with a preference for cyclic substrates. Catalyzes stereoselective conversion of 4-oxo-L-proline to cis-4-hydroxy-L-proline, likely a detoxification mechanism for ketoprolines. Mediates the formation of 2,5-dihydroxybenzoate (2,5-DHBA), a siderophore that chelates free cytoplasmic iron and associates with LCN2, thereby regulating iron transport and homeostasis while protecting cells against free radical-induced oxidative stress. The iron-siderophore complex is imported into mitochondria, providing an iron source for mitochondrial metabolic processes in particular heme synthesis. May act as a 3-hydroxybutyrate dehydrogenase. (Microbial infection) May play a role in susceptibility to bacterial infection by providing an assimilable source of iron that is exploited by pathogenic bacteria. Host iron-siderophore complexes can be used by bacteria to promote their own growth and pathogenicity. The sequence is that of Dehydrogenase/reductase SDR family member 6 from Mus musculus (Mouse).